An 880-amino-acid polypeptide reads, in one-letter code: DNA gyrase subunit A (880 aa).

The 496-residue stretch at 35–530 (LPDVRDGLKP…ASGDIDLEDL (496 aa)) folds into the Topo IIA-type catalytic domain. The O-(5'-phospho-DNA)-tyrosine intermediate role is filled by Tyr-123. The short motif at 557 to 563 (QRRGGKG) is the GyrA-box element.

Belongs to the type II topoisomerase GyrA/ParC subunit family. As to quaternary structure, heterotetramer, composed of two GyrA and two GyrB chains. In the heterotetramer, GyrA contains the active site tyrosine that forms a transient covalent intermediate with DNA, while GyrB binds cofactors and catalyzes ATP hydrolysis.

The protein resides in the cytoplasm. It carries out the reaction ATP-dependent breakage, passage and rejoining of double-stranded DNA.. In terms of biological role, a type II topoisomerase that negatively supercoils closed circular double-stranded (ds) DNA in an ATP-dependent manner to modulate DNA topology and maintain chromosomes in an underwound state. Negative supercoiling favors strand separation, and DNA replication, transcription, recombination and repair, all of which involve strand separation. Also able to catalyze the interconversion of other topological isomers of dsDNA rings, including catenanes and knotted rings. Type II topoisomerases break and join 2 DNA strands simultaneously in an ATP-dependent manner. This is DNA gyrase subunit A from Haemophilus influenzae (strain ATCC 51907 / DSM 11121 / KW20 / Rd).